We begin with the raw amino-acid sequence, 86 residues long: MSIQKSTDSSSLAEVIDRILDKGIVIDAFARVSLVGIEILTIEARVVIASVDTWLRYAEAVGLLTDKVEEEGLPGRTEERGAGLSF.

The protein belongs to the gas vesicle GvpA family. The gas vesicle shell is 2 nm thick and consists of a single layer of this protein. It forms helical ribs nearly perpendicular to the long axis of the vesicle.

The protein resides in the gas vesicle shell. Its function is as follows. Gas vesicles are hollow, gas filled proteinaceous nanostructures found in some microorganisms. During planktonic growth they allow positioning of the organism at a favorable depth for light or nutrient acquisition. GvpA forms the protein shell. In terms of biological role, it is not clear if the 2 type A proteins in this organism are functionally redundant. When the full gvp locus (gvpA1-gvpP-gvpQ-gvpA2-gvpR-gvpN-gvpF-gvpG-gvpL-gvpS-gvpK-gvpJ-gvpT-gvpU, called pNL26) is expressed in E.coli gas vesicles are made. In Priestia megaterium (Bacillus megaterium), this protein is Gas vesicle protein A1.